A 506-amino-acid chain; its full sequence is Probable Xaa-Pro aminopeptidase BDCG_04966 (506 aa).

Positions 285, 296, 433, and 471 each coordinate Mn(2+).

The protein belongs to the peptidase M24B family. Mn(2+) is required as a cofactor.

The enzyme catalyses Release of any N-terminal amino acid, including proline, that is linked to proline, even from a dipeptide or tripeptide.. Catalyzes the removal of a penultimate prolyl residue from the N-termini of peptides. This chain is Probable Xaa-Pro aminopeptidase BDCG_04966, found in Ajellomyces dermatitidis (strain ER-3 / ATCC MYA-2586) (Blastomyces dermatitidis).